The chain runs to 1038 residues: Eukaryotic translation initiation factor 3 subunit A (1038 aa).

Residues Leu92–Ala121 adopt a coiled-coil conformation. In terms of domain architecture, PCI spans Met339–Phe523. A coiled-coil region spans residues Ile611 to Ala899. Composition is skewed to basic and acidic residues over residues Ala621 to Arg632 and Arg800 to Arg901. Disordered regions lie at residues Ala621–Gln641 and Arg800–Gln1038. 2 stretches are compositionally biased toward low complexity: residues Lys943–Glu952 and Gly976–Ser993. Residues Asp1002–Ser1019 show a composition bias toward polar residues.

This sequence belongs to the eIF-3 subunit A family. Component of the eukaryotic translation initiation factor 3 (eIF-3) complex.

It localises to the cytoplasm. Functionally, RNA-binding component of the eukaryotic translation initiation factor 3 (eIF-3) complex, which is involved in protein synthesis of a specialized repertoire of mRNAs and, together with other initiation factors, stimulates binding of mRNA and methionyl-tRNAi to the 40S ribosome. The eIF-3 complex specifically targets and initiates translation of a subset of mRNAs involved in cell proliferation. The protein is Eukaryotic translation initiation factor 3 subunit A (tif32) of Aspergillus oryzae (strain ATCC 42149 / RIB 40) (Yellow koji mold).